The following is a 130-amino-acid chain: Glycine cleavage system H protein (130 aa).

The region spanning 25–106 (VALIGITDFA…PFDTWMVKLK (82 aa)) is the Lipoyl-binding domain. Position 66 is an N6-lipoyllysine (lysine 66).

It belongs to the GcvH family. The glycine cleavage system is composed of four proteins: P, T, L and H. It depends on (R)-lipoate as a cofactor.

In terms of biological role, the glycine cleavage system catalyzes the degradation of glycine. The H protein shuttles the methylamine group of glycine from the P protein to the T protein. This Leptospira biflexa serovar Patoc (strain Patoc 1 / Ames) protein is Glycine cleavage system H protein.